Here is a 206-residue protein sequence, read N- to C-terminus: Thymidylate kinase (206 aa).

11-18 (GIDGAGKT) serves as a coordination point for ATP.

Belongs to the thymidylate kinase family.

It catalyses the reaction dTMP + ATP = dTDP + ADP. Its function is as follows. Phosphorylation of dTMP to form dTDP in both de novo and salvage pathways of dTTP synthesis. The polypeptide is Thymidylate kinase (Paraburkholderia phytofirmans (strain DSM 17436 / LMG 22146 / PsJN) (Burkholderia phytofirmans)).